The primary structure comprises 302 residues: 4-hydroxy-tetrahydrodipicolinate synthase (302 aa).

T55 lines the pyruvate pocket. Catalysis depends on Y144, which acts as the Proton donor/acceptor. Residue K172 is the Schiff-base intermediate with substrate of the active site. Residue V214 coordinates pyruvate.

The protein belongs to the DapA family. Homotetramer; dimer of dimers.

It localises to the cytoplasm. It catalyses the reaction L-aspartate 4-semialdehyde + pyruvate = (2S,4S)-4-hydroxy-2,3,4,5-tetrahydrodipicolinate + H2O + H(+). The protein operates within amino-acid biosynthesis; L-lysine biosynthesis via DAP pathway; (S)-tetrahydrodipicolinate from L-aspartate: step 3/4. Functionally, catalyzes the condensation of (S)-aspartate-beta-semialdehyde [(S)-ASA] and pyruvate to 4-hydroxy-tetrahydrodipicolinate (HTPA). The polypeptide is 4-hydroxy-tetrahydrodipicolinate synthase (Synechococcus sp. (strain WH7803)).